We begin with the raw amino-acid sequence, 208 residues long: Fibroblast growth factor-binding protein 2 (208 aa).

Positions M1–G19 are cleaved as a signal peptide. 3 disulfide bridges follow: C43/C59, C68/C102, and C77/C113. Residues E130 to T181 are disordered. Cysteines 191 and 199 form a disulfide.

It belongs to the fibroblast growth factor-binding protein family.

Its subcellular location is the secreted. The protein localises to the extracellular space. This Gallus gallus (Chicken) protein is Fibroblast growth factor-binding protein 2 (FGFBP2).